The following is a 247-amino-acid chain: Carbonic anhydrase (247 aa).

The signal sequence occupies residues 1–34 (MMFNKQIFTILILSLSLALAGSGCISEGAEDNVA). Residue 93–95 (RSD) coordinates substrate. Catalysis depends on Glu96, which acts as the Proton donor/acceptor. 109–110 (QD) is a substrate binding site. Residue His115 participates in Zn(2+) binding. Glu118 is an active-site residue. 2 residues coordinate Zn(2+): His151 and His156. Substrate is bound at residue Asn236.

This sequence belongs to the gamma-class carbonic anhydrase family. In terms of assembly, homotrimer. Zn(2+) is required as a cofactor.

Its subcellular location is the secreted. It catalyses the reaction hydrogencarbonate + H(+) = CO2 + H2O. Its function is as follows. Reversible hydration of carbon dioxide. Important for growth on acetate. As a probably extracellular enzyme, it may support a H(+)/CH(3)COO(-) symport mechanism and/or conversion of CO(2) to HCO(3)(-), removing excess CO(2) produced by growth on acetate. The sequence is that of Carbonic anhydrase from Methanosarcina thermophila (strain ATCC 43570 / DSM 1825 / OCM 12 / VKM B-1830 / TM-1).